A 222-amino-acid polypeptide reads, in one-letter code: MKIPPICCVITQLPQAETLKKSEGAAFYELRLDLLGENWRETAVLLNKPFMATCRRSAEGGSFKGNEAERINRLEKAASAGAFMLDIEYSTPNLEEVLGRLRPQAKCLLSHHNFTDTPSAAKLKTLLKDMLTHQADIYKVITTATSINDNINLLNLTKEIPDKKIVAFAMGEPGILSRILCPLAGSPFTYASLNDGNKSASGQMTLAQMIEIYRSVNYANHT.

3-dehydroquinate contacts are provided by residues 29–31 and arginine 55; that span reads ELR. Histidine 112 (proton donor/acceptor) is an active-site residue. The Schiff-base intermediate with substrate role is filled by lysine 139. 3-dehydroquinate is bound by residues arginine 178, serine 199, and glutamine 203.

Belongs to the type-I 3-dehydroquinase family. As to quaternary structure, homodimer.

The catalysed reaction is 3-dehydroquinate = 3-dehydroshikimate + H2O. Its pathway is metabolic intermediate biosynthesis; chorismate biosynthesis; chorismate from D-erythrose 4-phosphate and phosphoenolpyruvate: step 3/7. Involved in the third step of the chorismate pathway, which leads to the biosynthesis of aromatic amino acids. Catalyzes the cis-dehydration of 3-dehydroquinate (DHQ) and introduces the first double bond of the aromatic ring to yield 3-dehydroshikimate. The chain is 3-dehydroquinate dehydratase from Dehalococcoides mccartyi (strain ATCC BAA-2100 / JCM 16839 / KCTC 5957 / BAV1).